The following is a 458-amino-acid chain: MLPSQSPAIFTVSRLNQTVRLLLEHEMGQVWISGEISNFTQPASGHWYFTLKDDTAQVRCAMFRNSNRRVTFRPQHGQQVLVRANITLYEPRGDYQIIVESMQPAGEGLLQQKYEQLKAKLQTEGLFDLQYKKSLPSPAHCVGVITSKTGAALHDILHVLKRRDPSLPVIIYSTAVQGDDAPGQIVRAIELANKRNECDVLIVGRGGGSLEDLWSFNDERVARAIFASRIPIVSAVGHETDVTIADFVADLRAPTPSAAAEVVSRNQQELLRQVQSTRQRLEMAMDYYLANRTRRFTQIHHRLQQQHPQLRLARQQTMLERLQKRMSFALENQLKRAGQQQQRLTRQLVQQNPQSRIHRAQTRIQQLEYRLAETLRAQLSATRERFGNAVTHLEAVSPLSTLARGYSVTSAADGAVLKQVKQVKVGETLITRLGDGVVISEVSAVTKTRKSRKKTSNP.

It belongs to the XseA family. As to quaternary structure, heterooligomer composed of large and small subunits.

It localises to the cytoplasm. It carries out the reaction Exonucleolytic cleavage in either 5'- to 3'- or 3'- to 5'-direction to yield nucleoside 5'-phosphates.. Its function is as follows. Bidirectionally degrades single-stranded DNA into large acid-insoluble oligonucleotides, which are then degraded further into small acid-soluble oligonucleotides. This Escherichia coli O81 (strain ED1a) protein is Exodeoxyribonuclease 7 large subunit.